Consider the following 758-residue polypeptide: Ribosomal RNA processing protein 1 homolog B (758 aa).

The residue at position 245 (Ser245) is a Phosphoserine. Residues 259–272 (AVSKKKTALGKNHS) show a composition bias toward basic residues. Positions 259–285 (AVSKKKTALGKNHSRKDGLSDERGRDD) are disordered. A compositionally biased stretch (basic and acidic residues) spans 273 to 285 (RKDGLSDERGRDD). 4 positions are modified to phosphoserine: Ser350, Ser392, Ser394, and Ser395. The tract at residues 381–598 (GSRVFCVEEE…KTASLKKRKK (218 aa)) is disordered. Basic residues predominate over residues 397–408 (QKRRRKKKKKHH). Residues 447-457 (GAEATSSTGEE) show a composition bias toward low complexity. Phosphoserine occurs at positions 452 and 458. Residues 469–481 (HNKRKRPRKKSPR) are compositionally biased toward basic residues. A compositionally biased stretch (low complexity) spans 498 to 513 (SQSGPSGSHPQGPRGS). Ser513 carries the post-translational modification Phosphoserine. Residues 566–575 (QRRRLQKKKA) show a composition bias toward basic residues. Ser579 is modified (phosphoserine). At Lys652 the chain carries N6-acetyllysine. A disordered region spans residues 660–681 (KSSTATHPPGPAVQLNKTPSSS). Phosphoserine occurs at positions 702 and 706. The tract at residues 707–758 (PTGPSRVAFDPEQKPLHGVLKTPTSSPASSPLVAKKPLTTTPRRRPRAMDFF) is disordered. Arg712 bears the Citrulline mark. Residue Thr728 is modified to Phosphothreonine. Residues Ser732, Ser735, and Ser736 each carry the phosphoserine modification.

The protein belongs to the RRP1 family. In terms of assembly, interacts with the transcriptional activator E2F1. Interacts with serine/threonine-protein phosphatase PP1 subunits PPP1CB and PPP1CC but not with PPP1CA. Interacts with 60S ribosomal proteins RPL5 and RPL27, ribosomal processing protein RRP1/NNP1 and other nucleolar proteins including NOP2/NOL1 and FBL. Also interacts with nucleolar protein NPM1/B23. Interacts with splicing factor SRSF1 and with LUC7L3/CROP. Interacts with GTPase activator SIPA1. Interacts with CBX5/HP1alpha, H1-10, NCL, PARP1, TRIM28 and YBX3. As to quaternary structure, (Microbial infection) Interacts with influenza A virus nucleoprotein NP and with RNA-directed RNA polymerase subunits PB1 and PB2. In terms of processing, citrullinated by PADI4.

It localises to the nucleus. The protein resides in the nucleolus. Its subcellular location is the nucleoplasm. It is found in the chromosome. In terms of biological role, positively regulates DNA damage-induced apoptosis by acting as a transcriptional coactivator of proapoptotic target genes of the transcriptional activator E2F1. Likely to play a role in ribosome biogenesis by targeting serine/threonine protein phosphatase PP1 to the nucleolus. Involved in regulation of mRNA splicing. Inhibits SIPA1 GTPase activity. Involved in regulating expression of extracellular matrix genes. Associates with chromatin and may play a role in modulating chromatin structure. Its function is as follows. (Microbial infection) Following influenza A virus (IAV) infection, promotes viral mRNA transcription by facilitating the binding of IAV RNA-directed RNA polymerase to capped mRNA. The chain is Ribosomal RNA processing protein 1 homolog B (RRP1B) from Homo sapiens (Human).